The sequence spans 197 residues: Pyridoxal 5'-phosphate synthase subunit PdxT (197 aa).

Residue 50–52 (GES) coordinates L-glutamine. Cys-82 serves as the catalytic Nucleophile. L-glutamine contacts are provided by residues Arg-111 and 140-141 (IR). Catalysis depends on charge relay system residues His-176 and Glu-178.

The protein belongs to the glutaminase PdxT/SNO family. As to quaternary structure, in the presence of PdxS, forms a dodecamer of heterodimers. Only shows activity in the heterodimer.

It carries out the reaction aldehydo-D-ribose 5-phosphate + D-glyceraldehyde 3-phosphate + L-glutamine = pyridoxal 5'-phosphate + L-glutamate + phosphate + 3 H2O + H(+). The enzyme catalyses L-glutamine + H2O = L-glutamate + NH4(+). It functions in the pathway cofactor biosynthesis; pyridoxal 5'-phosphate biosynthesis. In terms of biological role, catalyzes the hydrolysis of glutamine to glutamate and ammonia as part of the biosynthesis of pyridoxal 5'-phosphate. The resulting ammonia molecule is channeled to the active site of PdxS. This is Pyridoxal 5'-phosphate synthase subunit PdxT from Streptomyces griseus subsp. griseus (strain JCM 4626 / CBS 651.72 / NBRC 13350 / KCC S-0626 / ISP 5235).